The sequence spans 464 residues: Aspartyl protease AED1 (464 aa).

Residues 1-25 form the signal peptide; that stretch reads MSIMRNFLSMIIMLCVCLNWCFAEG. The Peptidase A1 domain occupies 132-460; the sequence is YIVTIGIGTP…DVAGGRVGFA (329 aa). Active-site residues include D150 and D345. C384 and C425 are disulfide-bonded.

The protein belongs to the peptidase A1 family.

The protein resides in the secreted. It localises to the extracellular space. Its subcellular location is the apoplast. Aspartyl protease involved in a homeostatic feedback mechanism regulating systemic immunity. Has only mild or no influence on local defenses. Acts downstream of salicylic acid to suppress systemic immunity. In Arabidopsis thaliana (Mouse-ear cress), this protein is Aspartyl protease AED1.